A 214-amino-acid chain; its full sequence is Large ribosomal subunit protein uL3 (214 aa).

Residues 129–157 (FGRGPMSHGSKNHRRPGSIGAGTTPGRVF) are disordered.

This sequence belongs to the universal ribosomal protein uL3 family. In terms of assembly, part of the 50S ribosomal subunit. Forms a cluster with proteins L14 and L19.

One of the primary rRNA binding proteins, it binds directly near the 3'-end of the 23S rRNA, where it nucleates assembly of the 50S subunit. In Synechococcus sp. (strain JA-2-3B'a(2-13)) (Cyanobacteria bacterium Yellowstone B-Prime), this protein is Large ribosomal subunit protein uL3.